The following is a 68-amino-acid chain: Conotoxin Lp5.2 (68 aa).

The first 19 residues, 1–19, serve as a signal peptide directing secretion; it reads MRCVPVFIILLLLASPAAP. A propeptide spanning residues 20 to 54 is cleaved from the precursor; it reads KSLETRIQNDLIRAGLTDADLKTEKGFLSGLLNVA.

It belongs to the conotoxin T superfamily. Contains 2 disulfide bonds that can be either 'C1-C3, C2-C4' or 'C1-C4, C2-C3', since these disulfide connectivities have been observed for conotoxins with cysteine framework V (for examples, see AC P0DQQ7 and AC P81755). Expressed by the venom duct.

It is found in the secreted. The chain is Conotoxin Lp5.2 from Conus leopardus (Leopard cone).